The chain runs to 229 residues: Peptidase E (229 aa).

Residues Ser120, Asp135, and His157 each act as charge relay system in the active site.

Belongs to the peptidase S51 family.

It localises to the cytoplasm. It carries out the reaction Dipeptidase E catalyzes the hydrolysis of dipeptides Asp-|-Xaa. It does not act on peptides with N-terminal Glu, Asn or Gln, nor does it cleave isoaspartyl peptides.. In terms of biological role, hydrolyzes dipeptides containing N-terminal aspartate residues. May play a role in allowing the cell to use peptide aspartate to spare carbon otherwise required for the synthesis of the aspartate family of amino acids. This chain is Peptidase E, found in Salmonella newport (strain SL254).